Consider the following 471-residue polypeptide: Uronate isomerase (471 aa).

Belongs to the metallo-dependent hydrolases superfamily. Uronate isomerase family.

The enzyme catalyses D-glucuronate = D-fructuronate. The catalysed reaction is aldehydo-D-galacturonate = keto-D-tagaturonate. The protein operates within carbohydrate metabolism; pentose and glucuronate interconversion. The polypeptide is Uronate isomerase (Xanthomonas campestris pv. campestris (strain 8004)).